We begin with the raw amino-acid sequence, 196 residues long: MSEKATEIANLLSPTVESLGLELLGVEYLPAPGGATLRLYIDVPLAEQPERVINVDDCERVSREVSAQLDVEDPISGNYTLEVSSPGVDRPLFTLEQFARHTGESAKIVLKLAQDGRRRFQGEILRIDAEAEAVVFAVDGKDVQIGYDNIDKARIVPDWVALGLAPQKPNKPGPKKPGHEKKKPSNESAAGKPRAE.

The interval 164–196 (LAPQKPNKPGPKKPGHEKKKPSNESAAGKPRAE) is disordered. Positions 173–182 (GPKKPGHEKK) are enriched in basic residues.

The protein belongs to the RimP family.

It localises to the cytoplasm. In terms of biological role, required for maturation of 30S ribosomal subunits. This chain is Ribosome maturation factor RimP, found in Xanthomonas euvesicatoria pv. vesicatoria (strain 85-10) (Xanthomonas campestris pv. vesicatoria).